The sequence spans 310 residues: Protein A56 (310 aa).

Positions 1–16 (MKQLSIVILLLSIVYT) are cleaved as a signal peptide. The Virion surface portion of the chain corresponds to 17–275 (TKPHPTQISK…TKYTTSDFIE (259 aa)). The Ig-like V-type domain occupies 19–121 (PHPTQISKKL…TNDTDKIDYE (103 aa)). Cysteine 36 and cysteine 105 are oxidised to a cystine. N-linked (GlcNAc...) asparagine; by host glycosylation is found at asparagine 39, asparagine 113, and asparagine 133. The segment at 153 to 195 (HTEEQHDSDTTICTSESTTQISETSESTTSSQISETSESTSYG) is disordered. The span at 162 to 193 (TTICTSESTTQISETSESTTSSQISETSESTS) shows a compositional bias: low complexity. A glycan (N-linked (GlcNAc...) asparagine; by host) is linked at asparagine 203. A helical transmembrane segment spans residues 276 to 300 (IFGIVSLILLLAVAIFCIIYYFCSG). The Intravirion portion of the chain corresponds to 301 to 310 (RSRKQETNIL).

In terms of assembly, heterodimerizes with K2. The heterodimer A56/K2 interacts with components of the entry fusion complex A16 and G9. Interacts with K2 protein. Heterodimer with C3/VPC protein; disulfide-linked. In terms of processing, glycosylated; contains phosphate and sulfate-substituted glycans. O-glycosylation is required for hemagglutination and hemadsorption activities of infected cell membranes.

The protein localises to the virion membrane. It is found in the host membrane. Its function is as follows. Prevents cell to cell fusion by interacting with and directing the viral K2 protein on the host plasma membrane. The A56-K2 complex associates with components of the entry fusion complex (EFC) presumably to avoid superinfection and syncytium formation. Via its interaction with C3/VCP protein, protects the infected cell and probably also the extracellular enveloped virus from complement attack. The chain is Protein A56 (HA) from Raccoon poxvirus (RCN).